Here is a 329-residue protein sequence, read N- to C-terminus: GTP 3',8-cyclase (329 aa).

In terms of domain architecture, Radical SAM core spans 8-234 (AFARKFYYLR…QIRQRSDGPA (227 aa)). Arginine 17 provides a ligand contact to GTP. Cysteine 24 and cysteine 28 together coordinate [4Fe-4S] cluster. Tyrosine 30 contacts S-adenosyl-L-methionine. Position 31 (cysteine 31) interacts with [4Fe-4S] cluster. Residue arginine 68 coordinates GTP. Residue glycine 72 coordinates S-adenosyl-L-methionine. GTP is bound at residue threonine 99. Serine 123 contributes to the S-adenosyl-L-methionine binding site. Position 160 (lysine 160) interacts with GTP. Position 194 (methionine 194) interacts with S-adenosyl-L-methionine. Positions 257 and 260 each coordinate [4Fe-4S] cluster. Position 262–264 (262–264 (RLR)) interacts with GTP. Cysteine 274 lines the [4Fe-4S] cluster pocket.

Belongs to the radical SAM superfamily. MoaA family. In terms of assembly, monomer and homodimer. [4Fe-4S] cluster is required as a cofactor.

The catalysed reaction is GTP + AH2 + S-adenosyl-L-methionine = (8S)-3',8-cyclo-7,8-dihydroguanosine 5'-triphosphate + 5'-deoxyadenosine + L-methionine + A + H(+). The protein operates within cofactor biosynthesis; molybdopterin biosynthesis. Its function is as follows. Catalyzes the cyclization of GTP to (8S)-3',8-cyclo-7,8-dihydroguanosine 5'-triphosphate. This Klebsiella pneumoniae subsp. pneumoniae (strain ATCC 700721 / MGH 78578) protein is GTP 3',8-cyclase.